Reading from the N-terminus, the 196-residue chain is Holliday junction branch migration complex subunit RuvA (196 aa).

The interval 1–62 is domain I; that stretch reads MYEYINGLIT…ENEMTLYGFI (62 aa). The segment at 63 to 141 is domain II; it reads DENEKYLFNK…DLALSAGMTV (79 aa). A flexible linker region spans residues 142–146; sequence ETVPT. A domain III region spans residues 147-196; the sequence is TDNQALADALAALESLGYSAKDVAKLQTVLANQKDTTDGYIRSALKFLVK.

Belongs to the RuvA family. In terms of assembly, homotetramer. Forms an RuvA(8)-RuvB(12)-Holliday junction (HJ) complex. HJ DNA is sandwiched between 2 RuvA tetramers; dsDNA enters through RuvA and exits via RuvB. An RuvB hexamer assembles on each DNA strand where it exits the tetramer. Each RuvB hexamer is contacted by two RuvA subunits (via domain III) on 2 adjacent RuvB subunits; this complex drives branch migration. In the full resolvosome a probable DNA-RuvA(4)-RuvB(12)-RuvC(2) complex forms which resolves the HJ.

The protein localises to the cytoplasm. Functionally, the RuvA-RuvB-RuvC complex processes Holliday junction (HJ) DNA during genetic recombination and DNA repair, while the RuvA-RuvB complex plays an important role in the rescue of blocked DNA replication forks via replication fork reversal (RFR). RuvA specifically binds to HJ cruciform DNA, conferring on it an open structure. The RuvB hexamer acts as an ATP-dependent pump, pulling dsDNA into and through the RuvAB complex. HJ branch migration allows RuvC to scan DNA until it finds its consensus sequence, where it cleaves and resolves the cruciform DNA. The protein is Holliday junction branch migration complex subunit RuvA of Leuconostoc citreum (strain KM20).